The following is a 445-amino-acid chain: RING finger and transmembrane domain-containing protein 2 (445 aa).

Over 1 to 183 (MWLLAAHQVL…LLAKLCFQHK (183 aa)) the chain is Extracellular. Positions 12 to 41 (KMQRRHSSNTDNIPPERSRSQALSPEASVD) are disordered. The helical transmembrane segment at 184–203 (LGIAVCIGMASTFAYANSTL) threads the bilayer. Topologically, residues 204 to 215 (REQVSLKEKRSV) are cytoplasmic. Residues 216 to 236 (LVILWILAFLAGNTMYVLYTF) traverse the membrane as a helical segment. At 237-256 (SSQQLYSSLIFLKPNLETLD) the chain is on the extracellular side. The chain crosses the membrane as a helical span at residues 257-277 (FFDLLWIVGIADFVLKYITIA). Over 278 to 330 (LKCLIVALPKIILAVKSKGKFYLVIEELSQLFRSLVPIQLWYKYIMGDDSSNS) the chain is Cytoplasmic. The chain crosses the membrane as a helical span at residues 331 to 351 (YFLGGVLIVLYSLCKSFDICG). Topologically, residues 352–445 (RVGGLRKALK…GATSAHLQVY (94 aa)) are extracellular. The segment at 385–423 (CAICQAEFRDPMILLCQHVFCEECLCLWLDRERTCPLCR) adopts an RING-type zinc-finger fold.

The protein resides in the membrane. E3 ubiquitin-protein ligase that negatively regulates IL3-dependent cellular responses through IL3RA ubiquitination and degradation by the proteasome, having an anti-inflammatory effect. This Mus musculus (Mouse) protein is RING finger and transmembrane domain-containing protein 2 (Rnft2).